The primary structure comprises 239 residues: 1-(5-phosphoribosyl)-5-[(5-phosphoribosylamino)methylideneamino] imidazole-4-carboxamide isomerase (239 aa).

Catalysis depends on Asp8, which acts as the Proton acceptor. Residue Asp130 is the Proton donor of the active site.

Belongs to the HisA/HisF family.

The protein resides in the cytoplasm. It carries out the reaction 1-(5-phospho-beta-D-ribosyl)-5-[(5-phospho-beta-D-ribosylamino)methylideneamino]imidazole-4-carboxamide = 5-[(5-phospho-1-deoxy-D-ribulos-1-ylimino)methylamino]-1-(5-phospho-beta-D-ribosyl)imidazole-4-carboxamide. Its pathway is amino-acid biosynthesis; L-histidine biosynthesis; L-histidine from 5-phospho-alpha-D-ribose 1-diphosphate: step 4/9. The protein is 1-(5-phosphoribosyl)-5-[(5-phosphoribosylamino)methylideneamino] imidazole-4-carboxamide isomerase of Streptococcus thermophilus (strain ATCC BAA-491 / LMD-9).